The following is a 375-amino-acid chain: Succinyl-diaminopimelate desuccinylase (375 aa).

His66 is a Zn(2+) binding site. Asp68 is an active-site residue. Asp99 lines the Zn(2+) pocket. Glu133 (proton acceptor) is an active-site residue. Zn(2+) contacts are provided by Glu134, Glu162, and His348.

This sequence belongs to the peptidase M20A family. DapE subfamily. As to quaternary structure, homodimer. It depends on Zn(2+) as a cofactor. Co(2+) is required as a cofactor.

The enzyme catalyses N-succinyl-(2S,6S)-2,6-diaminopimelate + H2O = (2S,6S)-2,6-diaminopimelate + succinate. Its pathway is amino-acid biosynthesis; L-lysine biosynthesis via DAP pathway; LL-2,6-diaminopimelate from (S)-tetrahydrodipicolinate (succinylase route): step 3/3. In terms of biological role, catalyzes the hydrolysis of N-succinyl-L,L-diaminopimelic acid (SDAP), forming succinate and LL-2,6-diaminopimelate (DAP), an intermediate involved in the bacterial biosynthesis of lysine and meso-diaminopimelic acid, an essential component of bacterial cell walls. In Escherichia coli O139:H28 (strain E24377A / ETEC), this protein is Succinyl-diaminopimelate desuccinylase.